Here is a 184-residue protein sequence, read N- to C-terminus: uncharacterized protein (184 aa).

The disordered stretch occupies residues 1-24; it reads MGISDQINSNLSSQSPFTVSTNPS.

This is an uncharacterized protein from Dictyostelium discoideum (Social amoeba).